We begin with the raw amino-acid sequence, 305 residues long: Outer membrane protein assembly factor BamD (305 aa).

A signal peptide spans 1 to 24; that stretch reads MLRIFQGRPAVTIAAVLVAASVAG. Residue Cys-25 is the site of N-palmitoyl cysteine attachment. Cys-25 carries the S-diacylglycerol cysteine lipid modification. TPR repeat units follow at residues 41–74, 78–111, 113–136, and 174–207; these read VELL…HPYS, RRSI…YPGN, SAQY…NRDQ, and AGKE…HQTT.

Belongs to the BamD family. As to quaternary structure, part of the Bam complex.

It localises to the cell outer membrane. Its function is as follows. Part of the outer membrane protein assembly complex, which is involved in assembly and insertion of beta-barrel proteins into the outer membrane. The sequence is that of Outer membrane protein assembly factor BamD from Caulobacter vibrioides (strain ATCC 19089 / CIP 103742 / CB 15) (Caulobacter crescentus).